The sequence spans 215 residues: Cytochrome b6 (215 aa).

The helical transmembrane segment at 32 to 52 (IFYCLGGITLTCFLVQVATGF) threads the bilayer. Cys35 serves as a coordination point for heme c. Positions 86 and 100 each coordinate heme b. 3 helical membrane-spanning segments follow: residues 90–110 (ASMM…TGGF), 116–136 (LTWV…VTGY), and 186–206 (LHTF…FPMI). Heme b is bound by residues His187 and His202.

Belongs to the cytochrome b family. PetB subfamily. The 4 large subunits of the cytochrome b6-f complex are cytochrome b6, subunit IV (17 kDa polypeptide, PetD), cytochrome f and the Rieske protein, while the 4 small subunits are PetG, PetL, PetM and PetN. The complex functions as a dimer. Requires heme b as cofactor. The cofactor is heme c.

The protein localises to the plastid. Its subcellular location is the chloroplast thylakoid membrane. Component of the cytochrome b6-f complex, which mediates electron transfer between photosystem II (PSII) and photosystem I (PSI), cyclic electron flow around PSI, and state transitions. The sequence is that of Cytochrome b6 from Liriodendron tulipifera (Tuliptree).